The following is an 85-amino-acid chain: MKVTLIAILTCATVLVLHTTAAEELEAESQLMEVGMPDTELAAVDEERLFECSVSCEIEKEGNKDCKKKKCKGGWKCKFNMCVKV.

The signal sequence occupies residues Met1 to Ala22. Positions Glu23–Arg48 are excised as a propeptide. Disulfide bonds link Cys52-Cys66, Cys56-Cys77, and Cys71-Cys82.

The protein belongs to the neurotoxin 12 (Hwtx-2) family. 02 (Hwtx-2) subfamily. As to quaternary structure, monomer. Expressed by the venom gland.

Its subcellular location is the secreted. Its function is as follows. Neurotoxin active on both insects and mammals. This is U4-theraphotoxin-Hhn1a from Cyriopagopus hainanus (Chinese bird spider).